Reading from the N-terminus, the 319-residue chain is Ferrochelatase (319 aa).

Positions 194 and 275 each coordinate Fe cation.

Belongs to the ferrochelatase family.

The protein resides in the cytoplasm. The enzyme catalyses heme b + 2 H(+) = protoporphyrin IX + Fe(2+). Its pathway is porphyrin-containing compound metabolism; protoheme biosynthesis; protoheme from protoporphyrin-IX: step 1/1. In terms of biological role, catalyzes the ferrous insertion into protoporphyrin IX. The polypeptide is Ferrochelatase (Hamiltonella defensa subsp. Acyrthosiphon pisum (strain 5AT)).